The following is a 572-amino-acid chain: Proline--tRNA ligase (572 aa).

This sequence belongs to the class-II aminoacyl-tRNA synthetase family. ProS type 1 subfamily. Homodimer.

It localises to the cytoplasm. It carries out the reaction tRNA(Pro) + L-proline + ATP = L-prolyl-tRNA(Pro) + AMP + diphosphate. In terms of biological role, catalyzes the attachment of proline to tRNA(Pro) in a two-step reaction: proline is first activated by ATP to form Pro-AMP and then transferred to the acceptor end of tRNA(Pro). As ProRS can inadvertently accommodate and process non-cognate amino acids such as alanine and cysteine, to avoid such errors it has two additional distinct editing activities against alanine. One activity is designated as 'pretransfer' editing and involves the tRNA(Pro)-independent hydrolysis of activated Ala-AMP. The other activity is designated 'posttransfer' editing and involves deacylation of mischarged Ala-tRNA(Pro). The misacylated Cys-tRNA(Pro) is not edited by ProRS. The sequence is that of Proline--tRNA ligase from Escherichia coli O139:H28 (strain E24377A / ETEC).